Consider the following 1821-residue polypeptide: MSRERKGLSELRSELYFLIARFLEDGPCQQAAQVLIREVAEKELLPRRTDWTGKEHPRTYQNLVKYYRHLAPDHLLQICHRLGPLLEQEIPQSVPGVQTLLGAGRQSLLRTNKSCKHVVWKGSALAALHCGRPPESPVNYGSPPSIADTLFSRKLNGKYRLERLVPTAVYQHMKMHKRILGHLSSVYCVTFDRTGRRIFTGSDDCLVKIWATDDGRLLATLRGHAAEISDMAVNYENTMIAAGSCDKMIRVWCLRTCAPLAVLQGHSASITSLQFSPLCSGSKRYLSSTGADGTICFWLWDAGTLKINPRPTKFTERPRPGVQMICSSFSAGGMFLATGSTDHIIRVYFFGSGQPEKISELEFHTDKVDSIQFSNTSNRFVSGSRDGTARIWQFKRREWKSILLDMATRPAGQNLQGIEDKITKMKVTMVAWDRHDNTVITAVNNMTLKVWNSYTGQLIHVLMGHEDEVFVLEPHPFDPRVLFSAGHDGNVIVWDLARGVKVRSYFNMIEGQGHGAVFDCKCSPDGQHFACTDSHGHLLIFGFGSSSKYDKIADQMFFHSDYRPLIRDANNFVLDEQTQQAPHLMPPPFLVDVDGNPHPSRYQRLVPGRENCREEQLIPQMGVTSSGLNQVLSQQANQDISPLDSMIQRLQQEQDLRRSGEAGVSNASRVNRGSVSSTSEVHSPPNIGLRRSGQIEGVRQMHSNAPRSEIATERDLVAWSRRVVVPELSAGVASRQEEWRTAKGEEEIKSYRSEEKRKHLTVAKENKILTVSKNHAHEHFLDLGDSKKQQANQHNYRTRSALEETPRPLEELENGTSSSDEGEVLAVSGGTSEEEERAWHSDGSSSDYSSDYSDWTADAGINLQPPKKVPKHKTKKPESSSDEEEESENQKQKHIKKERKKANEEKDGPTSPKKKKPKERKQKRLAVGELTENGLTLEEWLPSAWITDTLPRRCPFVPQMGDEVYYFRQGHEAYVEMARKNKIYSINPKKQPWHKMELREQELMKIVGIKYEVGLPTLCCLKLAFLDPDTGKLTGGSFTMKYHDMPDVIDFLVLRQQFDDAKYRPWNIGDRFRSVIDDAWWFGTIESQEPLQPEYPDSLFQCYNVCWDNGDTEKMSPWDMELIPNNAVFPEELGTSVPLTDVECRSLIYKPLDGEWGANPRDEECERIVGGINQLMTLDIASAFVAPVDLQAYPMYCTVVAYPTDLSTIKQRLENRFYRRFSSLMWEVRYIEHNTRTFNEPGSPIVKSAKFVTDLLLHFIKDQTCYNIIPLYNSMKKKVLSDSEEEEKDADVPGTSTRKRKDHQPRRRLRNRAQSYDIQAWKKQCQELLNLIFQCEDSEPFRQPVDLLEYPDYRDIIDTPMDFATVRETLEAGNYESPMELCKDVRLIFSNFKAYTPSKRSRIYSMSLRLSAFFEEHISSVLSDYKSALRFHKRNTISKKRKKRNRSSSLSSSAASSPERKKRILKPQLKSEVSTSPFSIPTRSVLPRHNAAQMNGKPESSSVVRTRSNRVAVDPVVTEQPSTSSATKAFVSKTNTSAMPGKAMLENSVRHSKALSTLSSPDPLTFSHATKNNSAKENMEKEKPVKRKMKSSVFSKASPLPKSAAVIEQGECKNNVLIPGTIQVNGHGGQPSKLVKRGPGRKPKVEVNTSSGEVTHKKRGRKPKNLQCAKQENSEQNNMHPIRADVLPSSTCNFLSETNAVKEDLLQKKSRGGRKPKRKMKTHNLDSELIVPTNVKVLRRSNRKKTDDPIDEEEEFEELKGSEPHMRTRNQGRRTAFYNEDDSEEEQRQLLFEDTSLTFGTSSRGRVRKLTEKAKANLIGW.

The residue at position 136 (Ser136) is a Phosphoserine. 5 WD repeats span residues 181-222 (GHLS…ATLR), 224-262 (HAAE…PLAV), 265-310 (GHSA…INPR), 319-360 (RPGV…KISE), and 363-402 (FHTD…WKSI). A Glycyl lysine isopeptide (Lys-Gly) (interchain with G-Cter in SUMO2) cross-link involves residue Lys421. 3 WD repeats span residues 422–461 (ITKM…LIHV), 464–504 (GHED…KVRS), and 512–551 (QGHG…KYDK). 6 positions are modified to phosphoserine: Ser641, Ser659, Ser674, Ser677, Ser683, and Ser692. 2 disordered regions span residues 653–695 (EQDL…SGQI) and 782–927 (DLGD…RLAV). The segment covering 665–681 (SNASRVNRGSVSSTSEV) has biased composition (polar residues). Basic and acidic residues predominate over residues 800–810 (SALEETPRPLE). A compositionally biased stretch (low complexity) spans 841-854 (SDGSSSDYSSDYSD). Residues Ser879, Ser880, Ser881, and Ser911 each carry the phosphoserine modification. Basic residues predominate over residues 912–924 (PKKKKPKERKQKR). A mediates interaction with IRS1 region spans residues 924–1129 (RLAVGELTEN…MELIPNNAVF (206 aa)). The region spanning 1156–1263 (WGANPRDEEC…DLLLHFIKDQ (108 aa)) is the Bromo 1 domain. 3 positions are modified to phosphoserine: Ser1281, Ser1283, and Ser1296. Positions 1282-1310 (DSEEEEKDADVPGTSTRKRKDHQPRRRLR) are disordered. Basic residues predominate over residues 1297 to 1310 (TRKRKDHQPRRRLR). Ser1315 carries the post-translational modification Phosphoserine. The region spanning 1316 to 1421 (YDIQAWKKQC…AFFEEHISSV (106 aa)) is the Bromo 2 domain. Thr1359 carries the post-translational modification Phosphothreonine. A Phosphoserine modification is found at Ser1405. Residues 1435–1446 (NTISKKRKKRNR) are compositionally biased toward basic residues. The tract at residues 1435–1507 (NTISKKRKKR…PESSSVVRTR (73 aa)) is disordered. The span at 1447–1457 (SSSLSSSAASS) shows a compositional bias: low complexity. Residue Lys1470 forms a Glycyl lysine isopeptide (Lys-Gly) (interchain with G-Cter in SUMO1); alternate linkage. Lys1470 is covalently cross-linked (Glycyl lysine isopeptide (Lys-Gly) (interchain with G-Cter in SUMO2); alternate). The segment covering 1471–1482 (SEVSTSPFSIPT) has biased composition (polar residues). At Ser1479 the chain carries Phosphoserine. Lys1497 is subject to N6-acetyllysine. Ser1525 is modified (phosphoserine). N6-acetyllysine is present on Lys1533. Polar residues predominate over residues 1556–1576 (STLSSPDPLTFSHATKNNSAK). Disordered regions lie at residues 1556-1596 (STLS…VFSK), 1623-1676 (QVNG…NSEQ), and 1740-1785 (RSNR…DSEE). At Ser1560 the chain carries Phosphoserine. A Glycyl lysine isopeptide (Lys-Gly) (interchain with G-Cter in SUMO2) cross-link involves residue Lys1644. Phosphoserine is present on Ser1651. A Glycyl lysine isopeptide (Lys-Gly) (interchain with G-Cter in SUMO2) cross-link involves residue Lys1670. A phosphoserine mark is found at Ser1762 and Ser1783.

As to quaternary structure, interacts (via bromo domain) with acetylated lysine residues on histone H1.4, histone H3 and H4 (in vitro). Interacts with IRS1 and IRS2. In terms of tissue distribution, widely expressed with most abundant expression detected in pancreatic islets, brain and skeletal muscle. Predominantly expressed in developing and regenerating neurons. Expressed in adult brain (granular layer of the olfactorium bulb, hippocampus, dentate gyrus and cerebellum internal granular layer). Expressed in the CA3 region of adult hippocampus, adult and fetal retina, perinatal dorsal root ganglion and embryonal olfactory epithelia (at protein level).

The protein localises to the nucleus. Its function is as follows. Probable regulator of the insulin and insulin-like growth factor signaling pathways. Stimulates cell proliferation through regulation of cyclin transcription and has an anti-apoptotic activity through AKT1 phosphorylation and activation. Plays a role in the regulation of cell morphology and cytoskeletal organization. The polypeptide is PH-interacting protein (Phip) (Mus musculus (Mouse)).